A 99-amino-acid polypeptide reads, in one-letter code: Putative UPF0320 protein YDR543C (99 aa).

The interval 80–99 (EKSPPKSPKHKNILSFNNNT) is disordered.

Belongs to the UPF0320 family.

In Saccharomyces cerevisiae (strain ATCC 204508 / S288c) (Baker's yeast), this protein is Putative UPF0320 protein YDR543C.